Reading from the N-terminus, the 188-residue chain is Trafficking protein particle complex subunit 5 (188 aa).

Belongs to the TRAPP small subunits family. BET3 subfamily. Part of the multisubunit TRAPP (transport protein particle) complex.

The protein resides in the golgi apparatus. The protein localises to the cis-Golgi network. It is found in the endoplasmic reticulum. In terms of biological role, may play a role in vesicular transport from endoplasmic reticulum to Golgi. In Gallus gallus (Chicken), this protein is Trafficking protein particle complex subunit 5 (TRAPPC5).